Consider the following 387-residue polypeptide: EARP and GARP complex-interacting protein 1 (387 aa).

At Met-1 the chain carries N-acetylmethionine. 6 WD repeats span residues Asp-4 to Phe-48, Ile-55 to Met-101, Glu-124 to Leu-164, Val-172 to Thr-214, Gln-219 to Thr-258, and Glu-263 to Met-302. The tract at residues Phe-310–Leu-335 is disordered. Phosphoserine is present on Ser-320. Positions Gln-322–Leu-335 are enriched in basic and acidic residues. A WD 7 repeat occupies Asn-338 to Arg-379.

The protein belongs to the WD repeat EIPR1 family. As to quaternary structure, interacts with two multisubunit tethering complexes: EARP composed of VPS50, VPS51, VPS52 and VPS53 subunits and GARP complex composed of VPS51, VPS52, VPS53 and VPS54 subunits. Interacts with SNAP29.

Its subcellular location is the golgi apparatus. It localises to the trans-Golgi network. In terms of biological role, acts as a component of endosomal retrieval machinery that is involved in protein transport from early endosomes to either recycling endosomes or the trans-Golgi network. Mediates the recruitment of Golgi-associated retrograde protein (GARP) complex to the trans-Golgi network and controls early endosome-to-Golgi transport of internalized protein. Promotes the recycling of internalized transferrin receptor (TFRC) to the plasma membrane through interaction with endosome-associated recycling protein (EARP) complex. Controls proper insulin distribution and secretion, and retention of cargo in mature dense core vesicles. Required for the stability of the endosome-associated retrograde protein (EARP) complex subunits and for proper localization and association of EARP with membranes. This is EARP and GARP complex-interacting protein 1 from Homo sapiens (Human).